We begin with the raw amino-acid sequence, 316 residues long: Ferrochelatase (316 aa).

Fe cation contacts are provided by His190 and Glu271.

This sequence belongs to the ferrochelatase family.

It is found in the cytoplasm. It catalyses the reaction heme b + 2 H(+) = protoporphyrin IX + Fe(2+). It functions in the pathway porphyrin-containing compound metabolism; protoheme biosynthesis; protoheme from protoporphyrin-IX: step 1/1. In terms of biological role, catalyzes the ferrous insertion into protoporphyrin IX. The polypeptide is Ferrochelatase (Sulfurimonas denitrificans (strain ATCC 33889 / DSM 1251) (Thiomicrospira denitrificans (strain ATCC 33889 / DSM 1251))).